Here is a 212-residue protein sequence, read N- to C-terminus: Acyl-homoserine-lactone synthase (212 aa).

This sequence belongs to the autoinducer synthase family.

The catalysed reaction is a fatty acyl-[ACP] + S-adenosyl-L-methionine = an N-acyl-L-homoserine lactone + S-methyl-5'-thioadenosine + holo-[ACP] + H(+). Its function is as follows. Required for the synthesis of OHHL (N-(3-oxohexanoyl)-L-homoserine lactone), an autoinducer molecule which binds to TraR and thus acts in the control of conjugal transfer. The sequence is that of Acyl-homoserine-lactone synthase (traI) from Rhizobium radiobacter (Agrobacterium tumefaciens).